Reading from the N-terminus, the 201-residue chain is Probable chemoreceptor glutamine deamidase CheD 2 (201 aa).

The protein belongs to the CheD family.

The catalysed reaction is L-glutaminyl-[protein] + H2O = L-glutamyl-[protein] + NH4(+). Probably deamidates glutamine residues to glutamate on methyl-accepting chemotaxis receptors (MCPs), playing an important role in chemotaxis. The protein is Probable chemoreceptor glutamine deamidase CheD 2 of Chromobacterium violaceum (strain ATCC 12472 / DSM 30191 / JCM 1249 / CCUG 213 / NBRC 12614 / NCIMB 9131 / NCTC 9757 / MK).